We begin with the raw amino-acid sequence, 444 residues long: MTQSIWNERRLGEDKLRRNDHRNPYQRDRARILHSAAFRRLQAKTQVLGVGMNDFYRTRLTHSLEVSQIGTGIRAQLKQKQPEFNPLLNSMSIIESLCLAHDIGHPPFGHGGEIALNYMMRAHGGFEGNGQTFRILTRLEPYTEFYGMNLCRRTLLGILKYPAPYSRLCREQPNETVQHFRQLKPSQWPPVKGIFDDDLAILDWVLEPLSKADKQLFLSSYTVADGQHKRTRYKSLDCSIMELADDIAYAVHDLEDAIVMGIVSEQQWHNDVTQVLCNSEDEWLQNEFATMSLRLFSAKHHQRKDAIGTLVNGFVTAISINEVEGFDEPLLKYNAALEPAFDIALNVLKQFVFKYVIRKPEIQMLEYKGHQIVMELFEAFISDPERLLPLNTQERWIASEKQGENSHRVIADYISGMTDEFAARLHQHLFSPKSGSMMELNCEF.

One can recognise an HD domain in the interval 59–250; sequence RLTHSLEVSQ…MELADDIAYA (192 aa).

Belongs to the dGTPase family. Type 2 subfamily.

This is Deoxyguanosinetriphosphate triphosphohydrolase-like protein from Shewanella halifaxensis (strain HAW-EB4).